We begin with the raw amino-acid sequence, 469 residues long: Protein nucleotidyltransferase YdiU (469 aa).

8 residues coordinate ATP: Gly80, Gly82, Arg83, Lys103, Asp115, Gly116, Arg166, and Arg173. Asp243 functions as the Proton acceptor in the catalytic mechanism. 2 residues coordinate Mg(2+): Asn244 and Asp253. Asp253 is an ATP binding site.

The protein belongs to the SELO family. Mg(2+) serves as cofactor. The cofactor is Mn(2+).

It catalyses the reaction L-seryl-[protein] + ATP = 3-O-(5'-adenylyl)-L-seryl-[protein] + diphosphate. The enzyme catalyses L-threonyl-[protein] + ATP = 3-O-(5'-adenylyl)-L-threonyl-[protein] + diphosphate. The catalysed reaction is L-tyrosyl-[protein] + ATP = O-(5'-adenylyl)-L-tyrosyl-[protein] + diphosphate. It carries out the reaction L-histidyl-[protein] + UTP = N(tele)-(5'-uridylyl)-L-histidyl-[protein] + diphosphate. It catalyses the reaction L-seryl-[protein] + UTP = O-(5'-uridylyl)-L-seryl-[protein] + diphosphate. The enzyme catalyses L-tyrosyl-[protein] + UTP = O-(5'-uridylyl)-L-tyrosyl-[protein] + diphosphate. Functionally, nucleotidyltransferase involved in the post-translational modification of proteins. It can catalyze the addition of adenosine monophosphate (AMP) or uridine monophosphate (UMP) to a protein, resulting in modifications known as AMPylation and UMPylation. The protein is Protein nucleotidyltransferase YdiU of Pseudoalteromonas translucida (strain TAC 125).